We begin with the raw amino-acid sequence, 92 residues long: MKVVPILLFVLLAALQYRLWFGKNSIPEYVAMEKSVAEQAEQNTELLQRNNLLKADIQDLKVGLEAVEERARNELGLIKQGETFYRILPSEE.

The Cytoplasmic portion of the chain corresponds to 1 to 3 (MKV). The chain crosses the membrane as a helical span at residues 4 to 21 (VPILLFVLLAALQYRLWF). At 22–92 (GKNSIPEYVA…TFYRILPSEE (71 aa)) the chain is on the periplasmic side. Residues 31 to 74 (AMEKSVAEQAEQNTELLQRNNLLKADIQDLKVGLEAVEERARNE) adopt a coiled-coil conformation.

The protein belongs to the FtsB family. Part of a complex composed of FtsB, FtsL and FtsQ.

Its subcellular location is the cell inner membrane. Its function is as follows. Essential cell division protein. May link together the upstream cell division proteins, which are predominantly cytoplasmic, with the downstream cell division proteins, which are predominantly periplasmic. This chain is Cell division protein FtsB, found in Pseudoalteromonas atlantica (strain T6c / ATCC BAA-1087).